Reading from the N-terminus, the 326-residue chain is Zona pellucida-binding protein 2 (326 aa).

The first 20 residues, 1-20 (MLAWALLSAVLWSLAGVGSA), serve as a signal peptide directing secretion. Asn-86, Asn-220, and Asn-256 each carry an N-linked (GlcNAc...) asparagine glycan.

It belongs to the zona pellucida-binding protein Sp38 family. N-glycosylated.

The protein resides in the secreted. Its subcellular location is the cytoplasmic vesicle. It localises to the secretory vesicle. It is found in the acrosome. Functionally, is implicated in sperm-oocyte interaction during fertilization. This is Zona pellucida-binding protein 2 (Zpbp2) from Rattus norvegicus (Rat).